The sequence spans 767 residues: ABC transporter B family member 4 (767 aa).

The tract at residues 81–104 (NYSSSSNSGNNNNNNYNNKNNNNN) is disordered. 5 helical membrane-spanning segments follow: residues 208–228 (IWLF…GLQI), 252–272 (AIFI…MISV), 324–344 (VSLG…LILI), 350–370 (LGMM…AGWL), and 429–449 (IGIF…LVYW). The region spanning 211 to 491 (FGFGIITAFF…LSILFTQIMS (281 aa)) is the ABC transmembrane type-1 domain. One can recognise an ABC transporter domain in the interval 524 to 760 (IKFINVDFKY…KGLYYKLVQR (237 aa)). 559 to 566 (GSSGGGKS) provides a ligand contact to ATP.

It belongs to the ABC transporter superfamily. ABCB family. Multidrug resistance exporter (TC 3.A.1.201) subfamily.

Its subcellular location is the membrane. This Dictyostelium discoideum (Social amoeba) protein is ABC transporter B family member 4 (abcB4).